The following is a 612-amino-acid chain: Dihydroxy-acid dehydratase (612 aa).

Position 81 (Asp81) interacts with Mg(2+). Cys122 is a binding site for [2Fe-2S] cluster. Positions 123 and 124 each coordinate Mg(2+). Lys124 carries the N6-carboxylysine modification. A [2Fe-2S] cluster-binding site is contributed by Cys193. Mg(2+) is bound at residue Glu489. Catalysis depends on Ser515, which acts as the Proton acceptor.

The protein belongs to the IlvD/Edd family. In terms of assembly, homodimer. Requires [2Fe-2S] cluster as cofactor. The cofactor is Mg(2+).

The enzyme catalyses (2R)-2,3-dihydroxy-3-methylbutanoate = 3-methyl-2-oxobutanoate + H2O. The catalysed reaction is (2R,3R)-2,3-dihydroxy-3-methylpentanoate = (S)-3-methyl-2-oxopentanoate + H2O. It participates in amino-acid biosynthesis; L-isoleucine biosynthesis; L-isoleucine from 2-oxobutanoate: step 3/4. It functions in the pathway amino-acid biosynthesis; L-valine biosynthesis; L-valine from pyruvate: step 3/4. Its function is as follows. Functions in the biosynthesis of branched-chain amino acids. Catalyzes the dehydration of (2R,3R)-2,3-dihydroxy-3-methylpentanoate (2,3-dihydroxy-3-methylvalerate) into 2-oxo-3-methylpentanoate (2-oxo-3-methylvalerate) and of (2R)-2,3-dihydroxy-3-methylbutanoate (2,3-dihydroxyisovalerate) into 2-oxo-3-methylbutanoate (2-oxoisovalerate), the penultimate precursor to L-isoleucine and L-valine, respectively. The chain is Dihydroxy-acid dehydratase from Ectopseudomonas mendocina (strain ymp) (Pseudomonas mendocina).